An 842-amino-acid polypeptide reads, in one-letter code: Squamosa promoter-binding-like protein 9 (842 aa).

The segment covering 1–18 has biased composition (gly residues); sequence MDAPGGGGGGGGGGGGVD. Disordered stretches follow at residues 1-22, 59-97, and 140-168; these read MDAP…AGEP, ALLP…RVRK, and RKKP…TPAE. The span at 69 to 85 shows a compositional bias: low complexity; that stretch reads PAEAEAEAAGPASLPSS. The segment covering 146-162 has biased composition (gly residues); sequence AGRGSGAAVGGSGGGAS. Residues 168–245 form an SBP-type; atypical zinc finger; that stretch reads EMKCQVPGCE…ERHNKRRRRK (78 aa). Residues cysteine 171, cysteine 176, cysteine 193, cysteine 196, cysteine 212, cysteine 215, histidine 219, and cysteine 231 each contribute to the Zn(2+) site. Positions 228-244 match the Bipartite nuclear localization signal motif; sequence KRSCRRKLERHNKRRRR. The span at 236–246 shows a compositional bias: basic residues; the sequence is ERHNKRRRRKP. Residues 236-256 form a disordered region; sequence ERHNKRRRRKPDSKGILEKDI.

As to expression, ubiquitous.

It localises to the nucleus. In terms of biological role, trans-acting factor that binds specifically to the consensus nucleotide sequence 5'-TNCGTACAA-3'. The protein is Squamosa promoter-binding-like protein 9 (SPL9) of Oryza sativa subsp. japonica (Rice).